The primary structure comprises 122 residues: Large ribosomal subunit protein uL14c (122 aa).

The protein belongs to the universal ribosomal protein uL14 family. In terms of assembly, part of the 50S ribosomal subunit.

Its subcellular location is the plastid. It is found in the chloroplast. Functionally, binds to 23S rRNA. The polypeptide is Large ribosomal subunit protein uL14c (Dioscorea elephantipes (Elephant's foot yam)).